The primary structure comprises 101 residues: Large ribosomal subunit protein bL28 (101 aa).

Belongs to the bacterial ribosomal protein bL28 family.

This Rhodopseudomonas palustris (strain BisB18) protein is Large ribosomal subunit protein bL28.